Reading from the N-terminus, the 452-residue chain is Bifunctional protein GlmU (452 aa).

Residues M1–K224 are pyrophosphorylase. UDP-N-acetyl-alpha-D-glucosamine is bound by residues L6–G9, K20, Q71, G76–T77, Y98–D100, G135, E149, N164, and N222. D100 lines the Mg(2+) pocket. N222 provides a ligand contact to Mg(2+). Positions V225–H245 are linker. An N-acetyltransferase region spans residues G246–K452. Positions 328 and 346 each coordinate UDP-N-acetyl-alpha-D-glucosamine. H358 acts as the Proton acceptor in catalysis. The UDP-N-acetyl-alpha-D-glucosamine site is built by Y361 and N372. Acetyl-CoA-binding positions include A375, N381–Y382, S400, A418, and R435.

The protein in the N-terminal section; belongs to the N-acetylglucosamine-1-phosphate uridyltransferase family. In the C-terminal section; belongs to the transferase hexapeptide repeat family. As to quaternary structure, homotrimer. Requires Mg(2+) as cofactor.

The protein localises to the cytoplasm. It catalyses the reaction alpha-D-glucosamine 1-phosphate + acetyl-CoA = N-acetyl-alpha-D-glucosamine 1-phosphate + CoA + H(+). The enzyme catalyses N-acetyl-alpha-D-glucosamine 1-phosphate + UTP + H(+) = UDP-N-acetyl-alpha-D-glucosamine + diphosphate. It participates in nucleotide-sugar biosynthesis; UDP-N-acetyl-alpha-D-glucosamine biosynthesis; N-acetyl-alpha-D-glucosamine 1-phosphate from alpha-D-glucosamine 6-phosphate (route II): step 2/2. The protein operates within nucleotide-sugar biosynthesis; UDP-N-acetyl-alpha-D-glucosamine biosynthesis; UDP-N-acetyl-alpha-D-glucosamine from N-acetyl-alpha-D-glucosamine 1-phosphate: step 1/1. It functions in the pathway bacterial outer membrane biogenesis; LPS lipid A biosynthesis. Catalyzes the last two sequential reactions in the de novo biosynthetic pathway for UDP-N-acetylglucosamine (UDP-GlcNAc). The C-terminal domain catalyzes the transfer of acetyl group from acetyl coenzyme A to glucosamine-1-phosphate (GlcN-1-P) to produce N-acetylglucosamine-1-phosphate (GlcNAc-1-P), which is converted into UDP-GlcNAc by the transfer of uridine 5-monophosphate (from uridine 5-triphosphate), a reaction catalyzed by the N-terminal domain. In Herminiimonas arsenicoxydans, this protein is Bifunctional protein GlmU.